The sequence spans 577 residues: 2-succinyl-5-enolpyruvyl-6-hydroxy-3-cyclohexene-1-carboxylate synthase (577 aa).

Belongs to the TPP enzyme family. MenD subfamily. As to quaternary structure, homodimer. Mg(2+) is required as a cofactor. Requires Mn(2+) as cofactor. Thiamine diphosphate serves as cofactor.

It carries out the reaction isochorismate + 2-oxoglutarate + H(+) = 5-enolpyruvoyl-6-hydroxy-2-succinyl-cyclohex-3-ene-1-carboxylate + CO2. Its pathway is quinol/quinone metabolism; 1,4-dihydroxy-2-naphthoate biosynthesis; 1,4-dihydroxy-2-naphthoate from chorismate: step 2/7. The protein operates within quinol/quinone metabolism; menaquinone biosynthesis. In terms of biological role, catalyzes the thiamine diphosphate-dependent decarboxylation of 2-oxoglutarate and the subsequent addition of the resulting succinic semialdehyde-thiamine pyrophosphate anion to isochorismate to yield 2-succinyl-5-enolpyruvyl-6-hydroxy-3-cyclohexene-1-carboxylate (SEPHCHC). This is 2-succinyl-5-enolpyruvyl-6-hydroxy-3-cyclohexene-1-carboxylate synthase from Christiangramia forsetii (strain DSM 17595 / CGMCC 1.15422 / KT0803) (Gramella forsetii).